We begin with the raw amino-acid sequence, 357 residues long: DNA replication and repair protein RecF (357 aa).

30–37 (GANGSGKT) is an ATP binding site.

It belongs to the RecF family.

It is found in the cytoplasm. The RecF protein is involved in DNA metabolism; it is required for DNA replication and normal SOS inducibility. RecF binds preferentially to single-stranded, linear DNA. It also seems to bind ATP. This chain is DNA replication and repair protein RecF, found in Escherichia coli O139:H28 (strain E24377A / ETEC).